We begin with the raw amino-acid sequence, 117 residues long: Minor capsid protein p17 (117 aa).

N12 carries N-linked (GlcNAc...) asparagine; by host glycosylation. The chain crosses the membrane as a helical span at residues 39–59 (AIILGILILLVIILIVVAIVY). 2 N-linked (GlcNAc...) asparagine; by host glycosylation sites follow: N61 and N98. The tract at residues 97–117 (KNSTTQQHIPSDEQLAELAHS) is disordered.

Belongs to the asfivirus minor capsid protein p17 family. As to quaternary structure, interacts with the minor capsid protein M1249L and with the hexon capsid protein p72 capsomers; these interactions form a rigid zipper structure that stabilizes the capsomers. Interacts with host STING1.

The protein resides in the virion membrane. It is found in the host endoplasmic reticulum membrane. Its function is as follows. Together with the penton and the other minor capsid proteins (M1249L, p49), forms a complicated network immediately below the outer capsid shell, stabilizing the whole capsid. Three copies of p17 encircle each p72 capsomer in the inner capsid shell, anchoring p72 capsomers on the inner membrane. Required for the assembly of the capsid and icosahedral morphogenesis. Additionally, inhibits the host cGAS-STING pathway through its interaction with STING1 and subsequent interference of the recruitment of downstream components TBK1 and IKBKE. This Ornithodoros (relapsing fever ticks) protein is Minor capsid protein p17.